The following is a 398-amino-acid chain: Protein FAM53A (398 aa).

A disordered region spans residues 85-253 (QWQPQSPRPG…TSTPALGGRR (169 aa)). Positions 103–115 (VDPSESTGSSTAP) are enriched in polar residues. Positions 123–132 (SLSEPEELVR) are enriched in basic and acidic residues. Serine 125 is modified (phosphoserine). Low complexity-rich tracts occupy residues 176–193 (STGP…ASGG) and 234–250 (TPLP…PALG). A Nuclear localization signal motif is present at residues 268 to 276 (KRSRRKRRR). Phosphoserine occurs at positions 301 and 304. The disordered stretch occupies residues 336–398 (PGCSQRGLRT…ELDLEQIENN (63 aa)). Over residues 363–375 (GSRRSSGDPRDGD) the composition is skewed to basic and acidic residues.

Belongs to the FAM53 family.

The protein localises to the nucleus. Functionally, may play an important role in neural development; the dorsomedial roof of the third ventricle. This is Protein FAM53A from Homo sapiens (Human).